Reading from the N-terminus, the 384-residue chain is Succinyl-diaminopimelate desuccinylase (384 aa).

Histidine 71 serves as a coordination point for Zn(2+). Aspartate 73 is a catalytic residue. Aspartate 104 lines the Zn(2+) pocket. The Proton acceptor role is filled by glutamate 139. The Zn(2+) site is built by glutamate 140, glutamate 168, and histidine 357.

The protein belongs to the peptidase M20A family. DapE subfamily. In terms of assembly, homodimer. Zn(2+) is required as a cofactor. Requires Co(2+) as cofactor.

The enzyme catalyses N-succinyl-(2S,6S)-2,6-diaminopimelate + H2O = (2S,6S)-2,6-diaminopimelate + succinate. Its pathway is amino-acid biosynthesis; L-lysine biosynthesis via DAP pathway; LL-2,6-diaminopimelate from (S)-tetrahydrodipicolinate (succinylase route): step 3/3. In terms of biological role, catalyzes the hydrolysis of N-succinyl-L,L-diaminopimelic acid (SDAP), forming succinate and LL-2,6-diaminopimelate (DAP), an intermediate involved in the bacterial biosynthesis of lysine and meso-diaminopimelic acid, an essential component of bacterial cell walls. The protein is Succinyl-diaminopimelate desuccinylase of Afipia carboxidovorans (strain ATCC 49405 / DSM 1227 / KCTC 32145 / OM5) (Oligotropha carboxidovorans).